The primary structure comprises 414 residues: Esterase FrsA (414 aa).

The protein belongs to the FrsA family.

It catalyses the reaction a carboxylic ester + H2O = an alcohol + a carboxylate + H(+). In terms of biological role, catalyzes the hydrolysis of esters. The polypeptide is Esterase FrsA (Escherichia coli O81 (strain ED1a)).